The following is a 442-amino-acid chain: Probable 6-phospho-beta-glucosidase (442 aa).

Residue leucine 5 to aspartate 73 coordinates NAD(+). Substrate-binding residues include arginine 96 and asparagine 150. Residues cysteine 172 and histidine 202 each contribute to the Mn(2+) site. The active-site Proton acceptor is tyrosine 256.

The protein belongs to the glycosyl hydrolase 4 family. NAD(+) is required as a cofactor. A divalent metal cation serves as cofactor.

The catalysed reaction is 6-phospho-beta-D-glucosyl-(1-&gt;4)-D-glucose + H2O = D-glucose 6-phosphate + D-glucose. Hydrolyzes phospho-beta-glucosides. The polypeptide is Probable 6-phospho-beta-glucosidase (licH) (Bacillus subtilis (strain 168)).